The chain runs to 70 residues: Putative membrane protein insertion efficiency factor (70 aa).

It belongs to the UPF0161 family.

Its subcellular location is the cell membrane. Its function is as follows. Could be involved in insertion of integral membrane proteins into the membrane. This chain is Putative membrane protein insertion efficiency factor, found in Symbiobacterium thermophilum (strain DSM 24528 / JCM 14929 / IAM 14863 / T).